A 148-amino-acid chain; its full sequence is MEVILLEKIANLGNLGDKVNVKAGYGRNYLLPQGKATAATPANIAEFEARRAELEKAAAEKKASAETRAAQLAELEVTITATAGDEGKLFGSIGTADIADALTASGVEVAKSEVRLPNGTIRQTGEYDVAVHLHTDVEATVKLIVVAG.

Belongs to the bacterial ribosomal protein bL9 family.

Binds to the 23S rRNA. This chain is Large ribosomal subunit protein bL9, found in Stutzerimonas stutzeri (strain A1501) (Pseudomonas stutzeri).